Here is a 459-residue protein sequence, read N- to C-terminus: Phosphomethylpyrimidine synthase (459 aa).

Residues asparagine 80, methionine 109, tyrosine 139, histidine 175, 195 to 197, 236 to 239, and glutamate 275 each bind substrate; these read SRG and DSLR. Residue histidine 279 coordinates Zn(2+). Tyrosine 302 contributes to the substrate binding site. Histidine 343 lines the Zn(2+) pocket. [4Fe-4S] cluster-binding residues include cysteine 423, cysteine 426, and cysteine 431.

This sequence belongs to the ThiC family. Requires [4Fe-4S] cluster as cofactor.

It carries out the reaction 5-amino-1-(5-phospho-beta-D-ribosyl)imidazole + S-adenosyl-L-methionine = 4-amino-2-methyl-5-(phosphooxymethyl)pyrimidine + CO + 5'-deoxyadenosine + formate + L-methionine + 3 H(+). It participates in cofactor biosynthesis; thiamine diphosphate biosynthesis. Catalyzes the synthesis of the hydroxymethylpyrimidine phosphate (HMP-P) moiety of thiamine from aminoimidazole ribotide (AIR) in a radical S-adenosyl-L-methionine (SAM)-dependent reaction. The chain is Phosphomethylpyrimidine synthase from Gloeothece citriformis (strain PCC 7424) (Cyanothece sp. (strain PCC 7424)).